A 301-amino-acid chain; its full sequence is Mas-related G-protein coupled receptor member A6 (301 aa).

The Extracellular segment spans residues 1–15 (MHRSISIRILITNLM). Residues 16–36 (IVILGLVGLTGNAIVFWLLLF) form a helical membrane-spanning segment. Residues 37-42 (RLRRNA) lie on the Cytoplasmic side of the membrane. Residues 43 to 63 (FSIYILNLALADFLFLLCHII) form a helical membrane-spanning segment. Residues 64–77 (ASTEHILTFSSPNS) lie on the Extracellular side of the membrane. The chain crosses the membrane as a helical span at residues 78–98 (IFINCLYTFRVLLYIAGLNML). The Cytoplasmic segment spans residues 99–128 (SAISIERCLSVMCPIWYRCHRPEHTSTVMC). The helical transmembrane segment at 129–149 (AMIWVLSLLLCILYRYFCGFL) threads the bilayer. Topologically, residues 150 to 163 (DTKYEDDYGCLAMN) are extracellular. The chain crosses the membrane as a helical span at residues 164 to 184 (FLTTAYLMFLFVVLCVSSLAL). Residues 185-203 (LARLFCGAGRMKLTRLYVT) lie on the Cytoplasmic side of the membrane. Residues 204–224 (ITLTLLVFLLCGLPCGFYWFL) traverse the membrane as a helical segment. At 225 to 240 (LSKIKNVFSVFEFSLY) the chain is on the extracellular side. The chain crosses the membrane as a helical span at residues 241-261 (LTSVVLTAINSCANPIIYFFV). Topologically, residues 262-301 (GSFRHRLKHQTLKMVLQSALQDTPETPENMVEMSRNKAEL) are cytoplasmic.

Belongs to the G-protein coupled receptor 1 family. Mas subfamily. Expressed in a subset of sensory neurons that includes nociceptors. Expressed in the subclass of non-peptidergic sensory neurons that are IB4(+) and VR1(-).

The protein resides in the cell membrane. Its function is as follows. Orphan receptor. May be a receptor for RFamide-family neuropeptides such as NPFF and NPAF, which are analgesic in vivo. May regulate nociceptor function and/or development, including the sensation or modulation of pain. The polypeptide is Mas-related G-protein coupled receptor member A6 (Mrgpra6) (Mus musculus (Mouse)).